The primary structure comprises 102 residues: Large ribosomal subunit protein bL21 (102 aa).

The protein belongs to the bacterial ribosomal protein bL21 family. As to quaternary structure, part of the 50S ribosomal subunit. Contacts protein L20.

Functionally, this protein binds to 23S rRNA in the presence of protein L20. This is Large ribosomal subunit protein bL21 from Bifidobacterium animalis subsp. lactis (strain AD011).